Consider the following 88-residue polypeptide: RNA-binding protein Hfq (88 aa).

A Sm domain is found at 10–70; that stretch reads DRFLNILRTK…ISTILPAEYI (61 aa).

The protein belongs to the Hfq family. As to quaternary structure, homohexamer.

In terms of biological role, RNA chaperone that binds small regulatory RNA (sRNAs) and mRNAs to facilitate mRNA translational regulation in response to envelope stress, environmental stress and changes in metabolite concentrations. Also binds with high specificity to tRNAs. In Fervidobacterium nodosum (strain ATCC 35602 / DSM 5306 / Rt17-B1), this protein is RNA-binding protein Hfq.